A 754-amino-acid chain; its full sequence is Phosphatidylinositol 4-phosphate 5-kinase 7 (754 aa).

MORN repeat units lie at residues tyrosine 16–isoleucine 38, tyrosine 39–lysine 61, tyrosine 62–valine 84, tyrosine 85–leucine 107, tyrosine 108–arginine 130, tyrosine 131–leucine 153, tyrosine 154–leucine 176, and tyrosine 177–lysine 198. One can recognise a PIPK domain in the interval glycine 329–phenylalanine 750. Residues tyrosine 710 to serine 731 form an activation loop region.

It carries out the reaction a 1,2-diacyl-sn-glycero-3-phospho-(1D-myo-inositol 4-phosphate) + ATP = a 1,2-diacyl-sn-glycero-3-phospho-(1D-myo-inositol-4,5-bisphosphate) + ADP + H(+). The polypeptide is Phosphatidylinositol 4-phosphate 5-kinase 7 (PIP5K7) (Arabidopsis thaliana (Mouse-ear cress)).